Reading from the N-terminus, the 892-residue chain is Histone deacetylase 4 (892 aa).

Residues 145-225 form a disordered region; that stretch reads NGNLSNLSVP…MSNVNGHDNS (81 aa). Composition is skewed to polar residues over residues 171–192 and 208–222; these read SAPT…ISQL and ESNS…VNGH. Residues 481–822 are histone deacetylase; it reads STGLGYDPLM…VQALIGESDD (342 aa). Residue His-628 is part of the active site.

Belongs to the histone deacetylase family. HD type 2 subfamily.

It is found in the nucleus. The enzyme catalyses N(6)-acetyl-L-lysyl-[histone] + H2O = L-lysyl-[histone] + acetate. Responsible for the deacetylation of lysine residues on the N-terminal part of the core histones (H2A, H2B, H3 and H4). Histone deacetylation gives a tag for epigenetic repression and plays an important role in transcriptional regulation, cell cycle progression and developmental events. Histone deacetylases act via the formation of large multiprotein complexes. This Caenorhabditis briggsae protein is Histone deacetylase 4 (hda-4).